Here is a 221-residue protein sequence, read N- to C-terminus: MIYIFTMVFSLNVLILSSSAARYDYFQFTQQYQQAFCNSNPTPCKDPPDKLFTVHGLWPSTKVGRDPEYCKTKRYRKIQRLEPQLEIIWPNVSDRKANRGFWRKQWYKHGSCASPALPNQKHYFETVIRMFLAEKQNVSRILSMATIEPEGKNRTLLEIQNAIRAGTNNMIPKLKCQKVNGMTELVEVTLCHDSNLTQFINCPRPLPQASPYFCPIDDIQY.

Residues 1-20 (MIYIFTMVFSLNVLILSSSA) form the signal peptide. Residue Gln-31 coordinates RNA. Cys-37 and Cys-44 are oxidised to a cystine. RNA is bound by residues His-55, 91–92 (NV), Phe-101, 104–105 (KQ), and 108–109 (KH). His-55 acts as the Proton donor in catalysis. Cys-70 and Cys-112 are disulfide-bonded. N-linked (GlcNAc...) asparagine glycosylation is present at Asn-91. Residue Gln-105 is part of the active site. Catalysis depends on His-109, which acts as the Proton acceptor. Residues Asn-137, Asn-153, and Asn-195 are each glycosylated (N-linked (GlcNAc...) asparagine). 2 disulfides stabilise this stretch: Cys-176–Cys-214 and Cys-191–Cys-202.

It belongs to the RNase T2 family. In terms of processing, N-linked core structure at Asn-91, Asn-137, and Asn-153 contains xylose and at Asn-195 contains xylose and fucose.

Its subcellular location is the secreted. It localises to the extracellular space. It catalyses the reaction a ribonucleotidyl-ribonucleotide-RNA + H2O = a 3'-end 3'-phospho-ribonucleotide-RNA + a 5'-end dephospho-ribonucleoside-RNA + H(+). In terms of biological role, self-incompatibility (SI) is the inherited ability of a flowering plant to prevent self-fertilization by discriminating between self and non-self pollen during pollination. In many species, self-incompatibility is controlled by the single, multiallelic locus S. The sequence is that of Ribonuclease S-2 from Pyrus pyrifolia (Chinese pear).